The chain runs to 135 residues: UPF0201 protein TON_1346 (135 aa).

The protein belongs to the UPF0201 family.

In Thermococcus onnurineus (strain NA1), this protein is UPF0201 protein TON_1346.